Consider the following 459-residue polypeptide: ATP synthase subunit beta (459 aa).

An ATP-binding site is contributed by 148–155; sequence GGAGVGKT.

Belongs to the ATPase alpha/beta chains family. In terms of assembly, F-type ATPases have 2 components, CF(1) - the catalytic core - and CF(0) - the membrane proton channel. CF(1) has five subunits: alpha(3), beta(3), gamma(1), delta(1), epsilon(1). CF(0) has three main subunits: a(1), b(2) and c(9-12). The alpha and beta chains form an alternating ring which encloses part of the gamma chain. CF(1) is attached to CF(0) by a central stalk formed by the gamma and epsilon chains, while a peripheral stalk is formed by the delta and b chains.

Its subcellular location is the cell inner membrane. The catalysed reaction is ATP + H2O + 4 H(+)(in) = ADP + phosphate + 5 H(+)(out). Functionally, produces ATP from ADP in the presence of a proton gradient across the membrane. The catalytic sites are hosted primarily by the beta subunits. This is ATP synthase subunit beta from Hahella chejuensis (strain KCTC 2396).